The following is a 493-amino-acid chain: Cytochrome c-552 (493 aa).

The first 25 residues, M1 to G25, serve as a signal peptide directing secretion. H116 contributes to the heme c binding site. Positions 144, 147, and 148 each coordinate heme. Heme c is bound by residues C182, C185, H186, C224, C227, and H228. Residues E230, Y231, K276, and Q278 each coordinate Ca(2+). Y231 is a substrate binding site. H279 lines the substrate pocket. 9 residues coordinate heme c: H290, C297, C300, H301, H315, C328, C331, H332, and H407.

This sequence belongs to the cytochrome c-552 family. It depends on Ca(2+) as a cofactor. Requires heme c as cofactor.

The protein localises to the periplasm. The catalysed reaction is 6 Fe(III)-[cytochrome c] + NH4(+) + 2 H2O = 6 Fe(II)-[cytochrome c] + nitrite + 8 H(+). It functions in the pathway nitrogen metabolism; nitrate reduction (assimilation). In terms of biological role, catalyzes the reduction of nitrite to ammonia, consuming six electrons in the process. The polypeptide is Cytochrome c-552 (Bacteroides thetaiotaomicron (strain ATCC 29148 / DSM 2079 / JCM 5827 / CCUG 10774 / NCTC 10582 / VPI-5482 / E50)).